The following is an 800-amino-acid chain: Protein PET111, mitochondrial (800 aa).

It to yeast YHR160C.

It localises to the mitochondrion matrix. Its function is as follows. Required for translation of the mitochondrial gene for cytochrome c oxidase subunit II (COX2). This is Protein PET111, mitochondrial (PET111) from Saccharomyces cerevisiae (strain ATCC 204508 / S288c) (Baker's yeast).